Here is a 191-residue protein sequence, read N- to C-terminus: Cell division protein SepF (191 aa).

Residues 156 to 167 (EEASPSNMSNKG) show a composition bias toward polar residues. Positions 156 to 191 (EEASPSNMSNKGNDLISKETSPAPEPAWGETVATAL) are disordered.

Belongs to the SepF family. As to quaternary structure, homodimer. Interacts with FtsZ.

Its subcellular location is the cytoplasm. Cell division protein that is part of the divisome complex and is recruited early to the Z-ring. Probably stimulates Z-ring formation, perhaps through the cross-linking of FtsZ protofilaments. Its function overlaps with FtsA. The chain is Cell division protein SepF from Prochlorococcus marinus (strain NATL2A).